Reading from the N-terminus, the 214-residue chain is ER lumen protein-retaining receptor 3 (214 aa).

The Lumenal portion of the chain corresponds to 1-4; that stretch reads MNVF. The helical transmembrane segment at 5–24 threads the bilayer; that stretch reads RISGDVSHLLAIIILLLKMW. Residues 25–32 are Cytoplasmic-facing; that stretch reads KSKSCAGI. The helical transmembrane segment at 33–52 threads the bilayer; sequence SGKSQLLFALVFTTRYLDLF. Positions 47 to 48 are interaction with the K-D-E-L motif on target proteins; that stretch reads RY. Residues 53–58 lie on the Lumenal side of the membrane; it reads TVFISA. The chain crosses the membrane as a helical span at residues 59–79; that stretch reads YNTVMKIVFLVCAYVTVYLIY. Over 80 to 92 the chain is Cytoplasmic; it reads GKFRKAYDSENDT. Residues 93 to 110 form a helical membrane-spanning segment; the sequence is FRLEFLLVPVIGLSFLEN. Over 111 to 116 the chain is Lumenal; it reads YEFTPL. Residues 117 to 135 traverse the membrane as a helical segment; it reads EILWTFSIYLESVAILPQL. Topologically, residues 136 to 149 are cytoplasmic; the sequence is FMISKTGEAESITT. The helical transmembrane segment at 150–168 threads the bilayer; the sequence is HYLFFLGLYRVLYLANWIW. The segment at 159–169 is interaction with the K-D-E-L motif on target proteins; it reads RVLYLANWIWR. Topologically, residues 169–178 are lumenal; that stretch reads RYHTEKFYDQ. The chain crosses the membrane as a helical span at residues 179–199; sequence IAVVSGVVQTIFYFDFFYLYI. Residues 200–214 lie on the Cytoplasmic side of the membrane; it reads TKVLKGKKLSLPMPV. The interval 204–207 is important for recycling of cargo proteins with the sequence motif K-D-E-L from the Golgi to the endoplasmic reticulum; sequence KGKK.

Belongs to the ERD2 family.

The protein localises to the endoplasmic reticulum membrane. It is found in the golgi apparatus membrane. It localises to the cytoplasmic vesicle. Its subcellular location is the COPI-coated vesicle membrane. In terms of biological role, receptor for the C-terminal sequence motif K-D-E-L that is present on endoplasmic reticulum resident proteins and that mediates their recycling from the Golgi back to the endoplasmic reticulum. The chain is ER lumen protein-retaining receptor 3 (kdelr3) from Xenopus tropicalis (Western clawed frog).